An 83-amino-acid polypeptide reads, in one-letter code: Erabutoxin b (83 aa).

The first 21 residues, 1-21, serve as a signal peptide directing secretion; it reads MKTLLLTLVVVTIVCLDLGYT. The segment at 24–38 is loop I; the sequence is CFNHQSSQPQTTKTC. Cystine bridges form between C24–C45, C38–C62, C64–C75, and C76–C81. A stretch between loop I and loop II region spans residues 39–44; that stretch reads SPGESS. The segment at 45-62 is loop II; it reads CYHKQWSDFRGTIIERGC. A loop III region spans residues 64 to 75; that stretch reads CPTVKPGIKLSC.

The protein belongs to the three-finger toxin family. Short-chain subfamily. Type I alpha-neurotoxin sub-subfamily. As to expression, expressed by the venom gland.

It is found in the secreted. Its function is as follows. Binds with high affinity to muscular nicotinic acetylcholine receptors (nAChRs) (tested on Torpedo marmorata, Kd=0.07 nM), and with low affinity to neuronal alpha-7/CHRNA7 nAChRs (tested on chimeric alpha-7/CHRNA7, Kd=22 uM) and inhibit acetylcholine from binding to the receptor, thereby impairing neuromuscular transmission. Produces peripheral paralysis by blocking neuromuscular transmission at the postsynaptic site. The chain is Erabutoxin b from Laticauda semifasciata (Black-banded sea krait).